The following is a 238-amino-acid chain: tRNA (guanine-N(1)-)-methyltransferase (238 aa).

Residues Gly110 and Leu129–Leu134 each bind S-adenosyl-L-methionine.

It belongs to the RNA methyltransferase TrmD family. In terms of assembly, homodimer.

It is found in the cytoplasm. It catalyses the reaction guanosine(37) in tRNA + S-adenosyl-L-methionine = N(1)-methylguanosine(37) in tRNA + S-adenosyl-L-homocysteine + H(+). Functionally, specifically methylates guanosine-37 in various tRNAs. This chain is tRNA (guanine-N(1)-)-methyltransferase, found in Clostridium botulinum (strain Eklund 17B / Type B).